The chain runs to 216 residues: Small ribosomal subunit protein uS3 (216 aa).

One can recognise a KH type-2 domain in the interval I38–R106.

It belongs to the universal ribosomal protein uS3 family. As to quaternary structure, part of the 30S ribosomal subunit. Forms a tight complex with proteins S10 and S14.

Functionally, binds the lower part of the 30S subunit head. Binds mRNA in the 70S ribosome, positioning it for translation. This Syntrophus aciditrophicus (strain SB) protein is Small ribosomal subunit protein uS3.